The primary structure comprises 93 residues: Small ribosomal subunit protein bS20c (93 aa).

It belongs to the bacterial ribosomal protein bS20 family.

Its subcellular location is the plastid. The protein resides in the chloroplast. Binds directly to 16S ribosomal RNA. In Thalassiosira pseudonana (Marine diatom), this protein is Small ribosomal subunit protein bS20c.